The following is a 335-amino-acid chain: L-tyrosine isonitrile synthase (335 aa).

Belongs to the isocyanide synthase family.

The enzyme catalyses D-ribulose 5-phosphate + L-tyrosine = (2S)-3-(4-hydroxyphenyl)-2-isocyanopropanoate + hydroxyacetone + formaldehyde + phosphate + H2O + H(+). Functionally, involved in the biosynthesis of rhabduscin, a tyrosine derivative which is a potent inhibitor of phenoloxidase, a key component of the insect's innate immune system. Responsible for the synthesis of the isonitrile group on tyrosine using the C2 of ribulose 5-phosphate as the source of the carbon atom. This is L-tyrosine isonitrile synthase from Xenorhabdus nematophila (strain ATCC 19061 / DSM 3370 / CCUG 14189 / LMG 1036 / NCIMB 9965 / AN6).